The sequence spans 245 residues: U11/U12 small nuclear ribonucleoprotein 35 kDa protein (245 aa).

The region spanning L51 to E129 is the RRM domain. Residues G146 to F162 show a composition bias toward basic and acidic residues. Residues G146–P165 form a disordered region. A Glycyl lysine isopeptide (Lys-Gly) (interchain with G-Cter in SUMO2) cross-link involves residue K172. Residues N173–G222 form a disordered region. Composition is skewed to basic and acidic residues over residues D174 to E185 and R192 to A216.

As to quaternary structure, component of the U11/U12 snRNPs that are part of the U12-type spliceosome.

It is found in the nucleus. The protein is U11/U12 small nuclear ribonucleoprotein 35 kDa protein (SNRNP35) of Bos taurus (Bovine).